We begin with the raw amino-acid sequence, 324 residues long: MVKPKVGINGFGRIGRLALRAAVEKDTVQVVAINDPFIELDYMVYMFNYDSTHGRFNGKISTSAGNLVVEKEGKATHTIKVFNLKDPAEIKWAEVGAEYVIESTGVFTTIEKASAHLKGGAKKVVISAPSADAPMYVMGVNEDKYDPAKDNVISNASCTTNCLAPLAKVINDEFGIIEGLMTTVHAVTATQKTVDGPNGKQWRDGRGAAQNIIPASTGAAKAVGKVIPELNGKLTGMAFRVPTPNVSVVDLTARLEKPASLDAIKAAVKKAAEGNLKGILGYTEDQVVSTDFLGDSRSSIFDAGACISLNPHFVKLVSWYDNEF.

NAD(+) is bound by residues 13–14, Asp35, and Lys85; that span reads RI. Residues 157 to 159, Thr188, 217 to 218, and Arg240 contribute to the D-glyceraldehyde 3-phosphate site; these read SCT and TG. The active-site Nucleophile is Cys158. Asn322 is a binding site for NAD(+).

This sequence belongs to the glyceraldehyde-3-phosphate dehydrogenase family. As to quaternary structure, homotetramer.

It is found in the cytoplasm. It carries out the reaction D-glyceraldehyde 3-phosphate + phosphate + NAD(+) = (2R)-3-phospho-glyceroyl phosphate + NADH + H(+). The protein operates within carbohydrate degradation; glycolysis; pyruvate from D-glyceraldehyde 3-phosphate: step 1/5. The protein is Glyceraldehyde-3-phosphate dehydrogenase 1 (GPD-1) of Globodera rostochiensis (Golden nematode worm).